A 510-amino-acid chain; its full sequence is Photosystem II CP47 reaction center protein (510 aa).

Residues 2 to 16 (GLPWYRVHTVLINDP) lie on the Cytoplasmic side of the membrane. Residues 17–37 (GRLIAAHLMHTALVAGWAGSM) form a helical membrane-spanning segment. At 38-94 (ALYELATFDPSDPVLNPMWRQGMFVLPFMARLGVTGSWSGWSITGETGIDPGFWSFE) the chain is on the lumenal side. Residues 95 to 116 (GVALAHIVLSGLLFLAACWHWV) traverse the membrane as a helical segment. Residues 117–134 (YWDLELFRDPRTGEPALD) lie on the Cytoplasmic side of the membrane. Residues 135–157 (LPKMFGIHLFLAGLLCFGFGAFH) form a helical membrane-spanning segment. Residues 158-196 (LTGLFGPGMWVSDPYGLTGSVQPVAPEWGPDGFNPYNPG) lie on the Lumenal side of the membrane. The helical transmembrane segment at 197-218 (GVVAHHIAAGIVGIIAGLFHIL) threads the bilayer. At 219–233 (VRPPQRLYKALRMGN) the chain is on the cytoplasmic side. Residues 234–254 (IETVLSSSIAAVFFAAFVVAG) traverse the membrane as a helical segment. The Lumenal segment spans residues 255–450 (TMWYGSATTP…GIFRTSPRGW (196 aa)). A helical membrane pass occupies residues 451–473 (FTFAHAVFALLFFFGHIWHGART). Topologically, residues 474-510 (LFRDVFSGIDPELSPEQVEWGFYQKVGDVTTRRKEAV) are cytoplasmic.

PSII is composed of 1 copy each of membrane proteins PsbA, PsbB, PsbC, PsbD, PsbE, PsbF, PsbH, PsbI, PsbJ, PsbK, PsbL, PsbM, PsbT, PsbX, PsbY, PsbZ, Psb30/Ycf12, peripheral proteins PsbO, CyanoQ (PsbQ), PsbU, PsbV and a large number of cofactors. It forms dimeric complexes. Part of a photosystem II (PSII) assembly intermediate complex PSII-I; crystallized from a strain deleted of psbJ, it forms monomeric PSII before addition of the oxygen evolving complex. PSII-I includes 3 assembly factors not found in mature PSII (Psb27, Psb28 and Psb34). Requires Binds multiple chlorophylls. PSII binds additional chlorophylls, carotenoids and specific lipids. as cofactor.

Its subcellular location is the cellular thylakoid membrane. Its function is as follows. One of the components of the core complex of photosystem II (PSII). It binds chlorophyll and helps catalyze the primary light-induced photochemical processes of PSII. PSII is a light-driven water:plastoquinone oxidoreductase, using light energy to abstract electrons from H(2)O, generating O(2) and a proton gradient subsequently used for ATP formation. In Thermosynechococcus vestitus (strain NIES-2133 / IAM M-273 / BP-1), this protein is Photosystem II CP47 reaction center protein.